Consider the following 218-residue polypeptide: Elongation factor Ts (218 aa).

Residues 82 to 85 form an involved in Mg(2+) ion dislocation from EF-Tu region; that stretch reads TDFV.

It belongs to the EF-Ts family.

Its subcellular location is the cytoplasm. Associates with the EF-Tu.GDP complex and induces the exchange of GDP to GTP. It remains bound to the aminoacyl-tRNA.EF-Tu.GTP complex up to the GTP hydrolysis stage on the ribosome. The sequence is that of Elongation factor Ts (tsf) from Synechocystis sp. (strain ATCC 27184 / PCC 6803 / Kazusa).